Reading from the N-terminus, the 325-residue chain is Beta-ketoacyl-[acyl-carrier-protein] synthase III (325 aa).

Catalysis depends on residues Cys112 and His250. Residues Gln251–Arg255 are ACP-binding. Residue Asn280 is part of the active site.

This sequence belongs to the thiolase-like superfamily. FabH family. In terms of assembly, homodimer.

It localises to the cytoplasm. The catalysed reaction is malonyl-[ACP] + acetyl-CoA + H(+) = 3-oxobutanoyl-[ACP] + CO2 + CoA. Its pathway is lipid metabolism; fatty acid biosynthesis. In terms of biological role, catalyzes the condensation reaction of fatty acid synthesis by the addition to an acyl acceptor of two carbons from malonyl-ACP. Catalyzes the first condensation reaction which initiates fatty acid synthesis and may therefore play a role in governing the total rate of fatty acid production. Possesses both acetoacetyl-ACP synthase and acetyl transacylase activities. Its substrate specificity determines the biosynthesis of branched-chain and/or straight-chain of fatty acids. This chain is Beta-ketoacyl-[acyl-carrier-protein] synthase III, found in Lactococcus lactis subsp. cremoris (strain MG1363).